A 477-amino-acid chain; its full sequence is Exodeoxyribonuclease 7 large subunit (477 aa).

Residues 456–477 (GGTVAPRKAPPKKPGGGQGSLL) are disordered.

Belongs to the XseA family. As to quaternary structure, heterooligomer composed of large and small subunits.

It is found in the cytoplasm. The catalysed reaction is Exonucleolytic cleavage in either 5'- to 3'- or 3'- to 5'-direction to yield nucleoside 5'-phosphates.. Bidirectionally degrades single-stranded DNA into large acid-insoluble oligonucleotides, which are then degraded further into small acid-soluble oligonucleotides. The chain is Exodeoxyribonuclease 7 large subunit from Parvibaculum lavamentivorans (strain DS-1 / DSM 13023 / NCIMB 13966).